The sequence spans 370 residues: MKRVDTIRPRSRAVRLHVRGLGLPDETAIQLWIVDGRISTEPVAGADTVFDGGWILPGLVDAHCHVGLGKHGNVELDEAIAQAETERDVGALLLRDCGSPTDTRGLDDHEDLPRIIRAGRHLARPKRYIAGFAVELEDESQLPAAVAEQARRGDGWVKLVGDWIDRQIGDLAPLWSDDVLKAAIDTAHAQGARVTAHVFSEDALPGLINAGIDCIEHGTGLTDDTIALMLEHGTALVPTLINLENFPGIADAAGRYPTYAAHMRDLYARGYGRVAAAREAGVPVYAGTDAGSTIEHGRIADEVAALQRIGMTAHEALGAACWDARRWLGRPGLDDRASADLLCYAQDPRQGPGVLQHPDLVILRGRTFGP.

The protein belongs to the metallo-dependent hydrolases superfamily.

This is an uncharacterized protein from Mycobacterium bovis (strain ATCC BAA-935 / AF2122/97).